Consider the following 704-residue polypeptide: Elongation factor G (704 aa).

Positions 8-291 (ANVRNIGIMA…AVIEYLPSPV (284 aa)) constitute a tr-type G domain. GTP contacts are provided by residues 17 to 24 (AHIDAGKT), 90 to 94 (DTPGH), and 144 to 147 (NKMD).

This sequence belongs to the TRAFAC class translation factor GTPase superfamily. Classic translation factor GTPase family. EF-G/EF-2 subfamily.

It is found in the cytoplasm. Its function is as follows. Catalyzes the GTP-dependent ribosomal translocation step during translation elongation. During this step, the ribosome changes from the pre-translocational (PRE) to the post-translocational (POST) state as the newly formed A-site-bound peptidyl-tRNA and P-site-bound deacylated tRNA move to the P and E sites, respectively. Catalyzes the coordinated movement of the two tRNA molecules, the mRNA and conformational changes in the ribosome. In Chlorobium phaeobacteroides (strain BS1), this protein is Elongation factor G.